The sequence spans 188 residues: Elongation factor P-like protein (188 aa).

It belongs to the elongation factor P family.

The sequence is that of Elongation factor P-like protein from Stenotrophomonas maltophilia (strain R551-3).